The primary structure comprises 179 residues: Bifunctional protein PyrR (179 aa).

Positions Val-99–Thr-111 match the PRPP-binding motif.

This sequence belongs to the purine/pyrimidine phosphoribosyltransferase family. PyrR subfamily. Homodimer and homohexamer; in equilibrium.

It catalyses the reaction UMP + diphosphate = 5-phospho-alpha-D-ribose 1-diphosphate + uracil. In terms of biological role, regulates transcriptional attenuation of the pyrimidine nucleotide (pyr) operon by binding in a uridine-dependent manner to specific sites on pyr mRNA. This disrupts an antiterminator hairpin in the RNA and favors formation of a downstream transcription terminator, leading to a reduced expression of downstream genes. Also displays a weak uracil phosphoribosyltransferase activity which is not physiologically significant. This chain is Bifunctional protein PyrR, found in Latilactobacillus sakei subsp. sakei (strain 23K) (Lactobacillus sakei subsp. sakei).